A 347-amino-acid chain; its full sequence is S-adenosylmethionine decarboxylase proenzyme 4 (347 aa).

Catalysis depends on residues glutamate 7 and glutamate 10. Residue glutamate 66 coordinates substrate. Serine 67 functions as the Schiff-base intermediate with substrate; via pyruvic acid in the catalytic mechanism. Serine 67 carries the pyruvic acid (Ser); by autocatalysis modification. Cysteine 81 serves as the catalytic Proton donor; for catalytic activity. Active-site proton acceptor; for processing activity residues include serine 237 and histidine 250. Glutamate 254 is a binding site for substrate.

The protein belongs to the eukaryotic AdoMetDC family. Requires pyruvate as cofactor. In terms of processing, is synthesized initially as an inactive proenzyme. Formation of the active enzyme involves a self-maturation process in which the active site pyruvoyl group is generated from an internal serine residue via an autocatalytic post-translational modification. Two non-identical subunits are generated from the proenzyme in this reaction, and the pyruvate is formed at the N-terminus of the alpha chain, which is derived from the carboxyl end of the proenzyme. The post-translation cleavage follows an unusual pathway, termed non-hydrolytic serinolysis, in which the side chain hydroxyl group of the serine supplies its oxygen atom to form the C-terminus of the beta chain, while the remainder of the serine residue undergoes an oxidative deamination to produce ammonia and the pyruvoyl group blocking the N-terminus of the alpha chain.

It catalyses the reaction S-adenosyl-L-methionine + H(+) = S-adenosyl 3-(methylsulfanyl)propylamine + CO2. Its pathway is amine and polyamine biosynthesis; S-adenosylmethioninamine biosynthesis; S-adenosylmethioninamine from S-adenosyl-L-methionine: step 1/1. In terms of biological role, essential for biosynthesis of the polyamines spermidine and spermine. Essential for polyamine homeostasis, and normal plant embryogenesis, growth and development. This chain is S-adenosylmethionine decarboxylase proenzyme 4, found in Arabidopsis thaliana (Mouse-ear cress).